A 220-amino-acid polypeptide reads, in one-letter code: ATP synthase subunit delta (220 aa).

This sequence belongs to the ATPase delta chain family. F-type ATPases have 2 components, F(1) - the catalytic core - and F(0) - the membrane proton channel. F(1) has five subunits: alpha(3), beta(3), gamma(1), delta(1), epsilon(1). F(0) has three main subunits: a(1), b(2) and c(10-14). The alpha and beta chains form an alternating ring which encloses part of the gamma chain. F(1) is attached to F(0) by a central stalk formed by the gamma and epsilon chains, while a peripheral stalk is formed by the delta and b chains.

Its subcellular location is the cell inner membrane. Functionally, f(1)F(0) ATP synthase produces ATP from ADP in the presence of a proton or sodium gradient. F-type ATPases consist of two structural domains, F(1) containing the extramembraneous catalytic core and F(0) containing the membrane proton channel, linked together by a central stalk and a peripheral stalk. During catalysis, ATP synthesis in the catalytic domain of F(1) is coupled via a rotary mechanism of the central stalk subunits to proton translocation. Its function is as follows. This protein is part of the stalk that links CF(0) to CF(1). It either transmits conformational changes from CF(0) to CF(1) or is implicated in proton conduction. This is ATP synthase subunit delta from Gluconobacter oxydans (strain 621H) (Gluconobacter suboxydans).